A 173-amino-acid polypeptide reads, in one-letter code: MTEEEKTKSEAEEIEQNNKEEEQEKSVEELLEEKEQEIQQYKDKLQRIHADFENFKKRSIKEKQEFVKFANEGLILKVLEAYEDLERALEVKEDKNLREGVELIYKKLTKILEDEGVEPIETKNQKFDPYKHEALMTEDNDDYENNEIIQDLQKGYTLNSKVIRYSKVKVCKK.

Over residues 1 to 28 the composition is skewed to basic and acidic residues; that stretch reads MTEEEKTKSEAEEIEQNNKEEEQEKSVE. A disordered region spans residues 1–30; that stretch reads MTEEEKTKSEAEEIEQNNKEEEQEKSVEEL.

It belongs to the GrpE family. Homodimer.

The protein localises to the cytoplasm. Functionally, participates actively in the response to hyperosmotic and heat shock by preventing the aggregation of stress-denatured proteins, in association with DnaK and GrpE. It is the nucleotide exchange factor for DnaK and may function as a thermosensor. Unfolded proteins bind initially to DnaJ; upon interaction with the DnaJ-bound protein, DnaK hydrolyzes its bound ATP, resulting in the formation of a stable complex. GrpE releases ADP from DnaK; ATP binding to DnaK triggers the release of the substrate protein, thus completing the reaction cycle. Several rounds of ATP-dependent interactions between DnaJ, DnaK and GrpE are required for fully efficient folding. This is Protein GrpE from Methanosphaera stadtmanae (strain ATCC 43021 / DSM 3091 / JCM 11832 / MCB-3).